The primary structure comprises 501 residues: Circadian clock oscillator protein KaiC (501 aa).

KaiC domains follow at residues 1–232 (MQVQ…ITVF) and 246–501 (IRIS…REKK). ATP-binding residues include Gly34, Thr35, Gly36, Lys37, Thr38, Ser74, Lys209, Leu210, Arg211, Thr213, His215, Thr275, Gly276, Thr277, Gly278, Lys279, and Thr280. Thr38 serves as a coordination point for Mg(2+). Thr280 and Glu303 together coordinate Mg(2+). Trp316 lines the ATP pocket. Ser416 is subject to Phosphoserine; by autocatalysis. A Phosphothreonine; by autocatalysis modification is found at Thr417. Arg436, Lys442, Met443, Arg444, Ser446, His448, and Lys450 together coordinate ATP.

Belongs to the KaiC family. As to quaternary structure, homohexamer; hexamerization is dependent on ATP-binding. Component of the KaiBC complex. KaiC interacts with SasA, activating its autokinase function and leading to RpaA activation. Mg(2+) serves as cofactor. Phosphorylated on serine and threonine residues by autocatalysis. Has a 4 step phosphorylation cycle; the autokinase acts first on Thr-417, then Ser-416. When Ser-416 is modified KaiC switches to an autophosphatase mode, acting first on phospho-Thr-417 then phospho-Ser-416.

It catalyses the reaction L-seryl-[protein] + ATP = O-phospho-L-seryl-[protein] + ADP + H(+). The enzyme catalyses L-threonyl-[protein] + ATP = O-phospho-L-threonyl-[protein] + ADP + H(+). It carries out the reaction ATP + H2O = ADP + phosphate + H(+). In terms of biological role, central component of the KaiBC oscillator complex, which constitutes the main circadian regulator in cyanobacteria. Its composition changes during the circadian cycle to control KaiC phosphorylation. Autophosphorylates and has a weak ATPase activity; ATPase activity defines the circadian period. This is Circadian clock oscillator protein KaiC from Prochlorococcus marinus (strain SARG / CCMP1375 / SS120).